The chain runs to 665 residues: Fructose-1,6-bisphosphatase class 3 (665 aa).

This sequence belongs to the FBPase class 3 family. It depends on Mn(2+) as a cofactor.

The catalysed reaction is beta-D-fructose 1,6-bisphosphate + H2O = beta-D-fructose 6-phosphate + phosphate. Its pathway is carbohydrate biosynthesis; gluconeogenesis. In Alkaliphilus metalliredigens (strain QYMF), this protein is Fructose-1,6-bisphosphatase class 3.